The sequence spans 719 residues: Translation initiation factor IF-2 (719 aa).

The span at 54-67 shows a compositional bias: basic and acidic residues; that stretch reads NKEETKPNVDEKPP. 2 disordered regions span residues 54–75 and 97–122; these read NKEE…LTDN and STKN…KRKN. Residues 109–122 show a composition bias toward basic residues; the sequence is KDKKKKNKKDKRKN. A tr-type G domain is found at 221-390; it reads HRSPVVTVMG…LLVSEMSELK (170 aa). Residues 230–237 form a G1 region; that stretch reads GHVDHGKT. 230 to 237 provides a ligand contact to GTP; the sequence is GHVDHGKT. Positions 255 to 259 are G2; that stretch reads GITQH. The segment at 276–279 is G3; it reads DTPG. GTP is bound by residues 276–280 and 330–333; these read DTPGH and NKMD. Positions 330-333 are G4; sequence NKMD. The interval 366 to 368 is G5; it reads SAR.

This sequence belongs to the TRAFAC class translation factor GTPase superfamily. Classic translation factor GTPase family. IF-2 subfamily.

The protein localises to the cytoplasm. In terms of biological role, one of the essential components for the initiation of protein synthesis. Protects formylmethionyl-tRNA from spontaneous hydrolysis and promotes its binding to the 30S ribosomal subunits. Also involved in the hydrolysis of GTP during the formation of the 70S ribosomal complex. This Alkaliphilus oremlandii (strain OhILAs) (Clostridium oremlandii (strain OhILAs)) protein is Translation initiation factor IF-2.